A 165-amino-acid polypeptide reads, in one-letter code: Transcription antitermination protein NusB (165 aa).

A disordered region spans residues 1 to 27 (MISDDTDQFNPRDAKSPEIAKGKSAKR). A compositionally biased stretch (basic and acidic residues) spans 10–21 (NPRDAKSPEIAK).

It belongs to the NusB family.

In terms of biological role, involved in transcription antitermination. Required for transcription of ribosomal RNA (rRNA) genes. Binds specifically to the boxA antiterminator sequence of the ribosomal RNA (rrn) operons. The polypeptide is Transcription antitermination protein NusB (Pseudomonas syringae pv. tomato (strain ATCC BAA-871 / DC3000)).